Reading from the N-terminus, the 425-residue chain is 5-aminovalerate aminotransferase DavT (425 aa).

Residues Gly112 to Ser113, Tyr139, and Asp240 to Gln243 contribute to the pyridoxal 5'-phosphate site. Lys269 is subject to N6-(pyridoxal phosphate)lysine. Residue Thr298 coordinates pyridoxal 5'-phosphate.

The protein belongs to the class-III pyridoxal-phosphate-dependent aminotransferase family. It depends on pyridoxal 5'-phosphate as a cofactor.

The catalysed reaction is 5-aminopentanoate + 2-oxoglutarate = 5-oxopentanoate + L-glutamate. Functionally, catalyzes the conversion of 5-aminovalerate to 5-oxopentanoate. The chain is 5-aminovalerate aminotransferase DavT (davT) from Pseudomonas putida (strain ATCC 47054 / DSM 6125 / CFBP 8728 / NCIMB 11950 / KT2440).